Consider the following 229-residue polypeptide: NAD(P)H-hydrate epimerase (229 aa).

The YjeF N-terminal domain occupies 10–217; the sequence is AINVDLELFN…ALQRKYELNL (208 aa). 60-64 lines the (6S)-NADPHX pocket; sequence NNGGD. Asn61 and Asp125 together coordinate K(+). Residues 129–135 and Asp158 contribute to the (6S)-NADPHX site; that span reads GFSFKPP. Ser161 provides a ligand contact to K(+).

It belongs to the NnrE/AIBP family. K(+) serves as cofactor.

It carries out the reaction (6R)-NADHX = (6S)-NADHX. The catalysed reaction is (6R)-NADPHX = (6S)-NADPHX. Catalyzes the epimerization of the S- and R-forms of NAD(P)HX, a damaged form of NAD(P)H that is a result of enzymatic or heat-dependent hydration. This is a prerequisite for the S-specific NAD(P)H-hydrate dehydratase to allow the repair of both epimers of NAD(P)HX. The chain is NAD(P)H-hydrate epimerase from Drosophila mojavensis (Fruit fly).